Reading from the N-terminus, the 152-residue chain is Protein FYV5 (152 aa).

The next 5 membrane-spanning stretches (helical) occupy residues 26-46 (IISICFSMLSFVFDFSVRICS), 56-76 (LISSSAFKVVSAFSLAGSCVL), 82-102 (VGIIVSLLLFNFSTCNFVLFL), 106-126 (LIDLFFCTFLPTPTFLPTPFF), and 127-147 (FMLHLPIFSLLNALELLYLII).

It localises to the cell membrane. It is found in the secreted. The protein localises to the cell wall. In terms of biological role, involved in maintaining an adequate ionic strength homeostasis of the cellular aqueous environment, necessary for normal growth rate. Required for survival upon exposure to K1 killer toxin and hence plays a role in cell wall glucan synthesis. Required for dithiothreitol (DTT) resistance. Involved in cell cycle progression. The protein is Protein FYV5 (FYV5) of Saccharomyces cerevisiae (strain ATCC 204508 / S288c) (Baker's yeast).